Consider the following 420-residue polypeptide: Serine hydroxymethyltransferase (420 aa).

(6S)-5,6,7,8-tetrahydrofolate-binding positions include leucine 121 and 125-127; that span reads GHL. N6-(pyridoxal phosphate)lysine is present on lysine 230. Residues glutamate 246 and 354–356 contribute to the (6S)-5,6,7,8-tetrahydrofolate site; that span reads SPF.

This sequence belongs to the SHMT family. Homodimer. Pyridoxal 5'-phosphate serves as cofactor.

Its subcellular location is the cytoplasm. The enzyme catalyses (6R)-5,10-methylene-5,6,7,8-tetrahydrofolate + glycine + H2O = (6S)-5,6,7,8-tetrahydrofolate + L-serine. Its pathway is one-carbon metabolism; tetrahydrofolate interconversion. The protein operates within amino-acid biosynthesis; glycine biosynthesis; glycine from L-serine: step 1/1. Its function is as follows. Catalyzes the reversible interconversion of serine and glycine with tetrahydrofolate (THF) serving as the one-carbon carrier. This reaction serves as the major source of one-carbon groups required for the biosynthesis of purines, thymidylate, methionine, and other important biomolecules. Also exhibits THF-independent aldolase activity toward beta-hydroxyamino acids, producing glycine and aldehydes, via a retro-aldol mechanism. In Rickettsia rickettsii (strain Iowa), this protein is Serine hydroxymethyltransferase.